The sequence spans 634 residues: SPARC-like protein 1 (634 aa).

An N-terminal signal peptide occupies residues 1-16 (MKAVLLLLYALGIAAA). The segment at 50-335 (ADIEKHPNHK…DDSKHGASDD (286 aa)) is disordered. A compositionally biased stretch (basic and acidic residues) spans 51 to 62 (DIEKHPNHKAEK). 3 positions are modified to phosphoserine: Ser-68, Ser-76, and Ser-84. The span at 73-83 (HEQSTEQDKTY) shows a compositional bias: basic and acidic residues. Residues 89–99 (LKDEEDGDGDL) are compositionally biased toward acidic residues. Over residues 131 to 144 (TVSTPFVDSDQPAN) the composition is skewed to polar residues. A glycan (N-linked (GlcNAc...) asparagine) is linked at Asn-144. Phosphoserine is present on residues Ser-151 and Ser-159. Composition is skewed to acidic residues over residues 189–198 (EKEEEEDPED) and 205–214 (NQEEEKEPPE). Over residues 233–258 (QESSQPTQISKTKNDFEQGSQGQEGD) the composition is skewed to polar residues. Ser-259 is subject to Phosphoserine. Composition is skewed to basic and acidic residues over residues 263-276 (GEDK…HLPH) and 292-303 (GNRKDTDEEKAV). Residues Ser-333 and Ser-340 each carry the phosphoserine modification. Residues 360 to 398 (EETPDESENRSEAGDNQGAKKAESSPNAEPSDEGNSRGH) are disordered. Basic and acidic residues predominate over residues 366–382 (SENRSEAGDNQGAKKAE). N-linked (GlcNAc...) asparagine glycosylation occurs at Asn-368. Phosphoserine is present on residues Ser-370 and Ser-390. Residues 402–424 (SCMNFQCKRGHTCKTDQHGKPHC) form the Follistatin-like domain. Cystine bridges form between Cys-403/Cys-414, Cys-408/Cys-424, Cys-426/Cys-460, Cys-432/Cys-453, Cys-442/Cys-479, Cys-485/Cys-596, and Cys-604/Cys-620. Residues 420–481 (GKPHCVCQDP…QLDYFGACKS (62 aa)) form the Kazal-like domain. N-linked (GlcNAc...) asparagine glycosylation is present at Asn-446. The EF-hand domain occupies 592–627 (PMEHCITRFFEECDPNKDKHITLKEWGHCFGIKEED). Residues Asp-605, Asn-607, Asp-609, His-611, and Glu-616 each contribute to the Ca(2+) site.

The protein belongs to the SPARC family. In terms of tissue distribution, expressed in many types of neurons in the brain.

Its subcellular location is the secreted. It localises to the extracellular space. The protein resides in the extracellular matrix. This chain is SPARC-like protein 1 (Sparcl1), found in Rattus norvegicus (Rat).